The primary structure comprises 439 residues: Uracil-regulated protein 1 (439 aa).

A disordered region spans residues 1 to 24 (MLATEQSRPAECNGAHAHEKTEEV). Residue 268–272 (RVHDE) coordinates GTP. 3 residues coordinate Zn(2+): cysteine 273, cysteine 284, and cysteine 286. Residue 315–317 (EGR) coordinates GTP. The Proton acceptor role is filled by aspartate 353. Arginine 355 serves as the catalytic Nucleophile. 2 residues coordinate GTP: serine 377 and lysine 382.

Belongs to the GTP cyclohydrolase II family.

It is found in the cytoplasm. The protein resides in the nucleus. This chain is Uracil-regulated protein 1 (urg1), found in Schizosaccharomyces pombe (strain 972 / ATCC 24843) (Fission yeast).